Here is a 123-residue protein sequence, read N- to C-terminus: Small ribosomal subunit protein uS12 (123 aa).

The residue at position 89 (Asp-89) is a 3-methylthioaspartic acid.

This sequence belongs to the universal ribosomal protein uS12 family. As to quaternary structure, part of the 30S ribosomal subunit. Contacts proteins S8 and S17. May interact with IF1 in the 30S initiation complex.

With S4 and S5 plays an important role in translational accuracy. Functionally, interacts with and stabilizes bases of the 16S rRNA that are involved in tRNA selection in the A site and with the mRNA backbone. Located at the interface of the 30S and 50S subunits, it traverses the body of the 30S subunit contacting proteins on the other side and probably holding the rRNA structure together. The combined cluster of proteins S8, S12 and S17 appears to hold together the shoulder and platform of the 30S subunit. This chain is Small ribosomal subunit protein uS12, found in Brucella abortus (strain S19).